A 225-amino-acid chain; its full sequence is Malate dehydrogenase (225 aa).

Asp-1 is an NAD(+) binding site. Substrate is bound by residues Arg-48 and Arg-54. NAD(+) contacts are provided by residues Asn-61 and 84-86; that span reads ITN. Residues Asn-86 and Arg-120 each coordinate substrate. His-144 (proton acceptor) is an active-site residue. Met-194 is an NAD(+) binding site.

The protein belongs to the LDH/MDH superfamily. MDH type 1 family. Homodimer.

The catalysed reaction is (S)-malate + NAD(+) = oxaloacetate + NADH + H(+). Its function is as follows. Catalyzes the reversible oxidation of malate to oxaloacetate. This Raoultella terrigena (Klebsiella terrigena) protein is Malate dehydrogenase (mdh).